A 435-amino-acid polypeptide reads, in one-letter code: ATP-dependent Clp protease ATP-binding subunit ClpX 3 (435 aa).

The ClpX-type ZB domain maps to Met1–Ser53. Zn(2+) contacts are provided by Cys12, Cys15, Cys34, and Cys37. Pro125–Leu132 is an ATP binding site.

The protein belongs to the ClpX chaperone family. In terms of assembly, component of the ClpX-ClpP complex. Forms a hexameric ring that, in the presence of ATP, binds to fourteen ClpP subunits assembled into a disk-like structure with a central cavity, resembling the structure of eukaryotic proteasomes.

In terms of biological role, ATP-dependent specificity component of the Clp protease. It directs the protease to specific substrates. Can perform chaperone functions in the absence of ClpP. The sequence is that of ATP-dependent Clp protease ATP-binding subunit ClpX 3 from Methylococcus capsulatus (strain ATCC 33009 / NCIMB 11132 / Bath).